Consider the following 295-residue polypeptide: Phosphoribosylaminoimidazole-succinocarboxamide synthase (295 aa).

Belongs to the SAICAR synthetase family.

It carries out the reaction 5-amino-1-(5-phospho-D-ribosyl)imidazole-4-carboxylate + L-aspartate + ATP = (2S)-2-[5-amino-1-(5-phospho-beta-D-ribosyl)imidazole-4-carboxamido]succinate + ADP + phosphate + 2 H(+). The protein operates within purine metabolism; IMP biosynthesis via de novo pathway; 5-amino-1-(5-phospho-D-ribosyl)imidazole-4-carboxamide from 5-amino-1-(5-phospho-D-ribosyl)imidazole-4-carboxylate: step 1/2. The chain is Phosphoribosylaminoimidazole-succinocarboxamide synthase from Desulforapulum autotrophicum (strain ATCC 43914 / DSM 3382 / VKM B-1955 / HRM2) (Desulfobacterium autotrophicum).